The primary structure comprises 445 residues: 3-phosphoshikimate 1-carboxyvinyltransferase (445 aa).

Residues 1–25 form a disordered region; that stretch reads MTDSNQPMPLQARKSGALHGTARVP. 3-phosphoshikimate contacts are provided by Lys28, Ser29, and Arg33. Lys28 is a binding site for phosphoenolpyruvate. Positions 101 and 129 each coordinate phosphoenolpyruvate. Residues Ser175, Gln177, Asp328, and Lys355 each coordinate 3-phosphoshikimate. Gln177 lines the phosphoenolpyruvate pocket. Asp328 serves as the catalytic Proton acceptor. Phosphoenolpyruvate contacts are provided by Arg359 and Arg402.

Belongs to the EPSP synthase family. As to quaternary structure, monomer.

It localises to the cytoplasm. It carries out the reaction 3-phosphoshikimate + phosphoenolpyruvate = 5-O-(1-carboxyvinyl)-3-phosphoshikimate + phosphate. It participates in metabolic intermediate biosynthesis; chorismate biosynthesis; chorismate from D-erythrose 4-phosphate and phosphoenolpyruvate: step 6/7. Its function is as follows. Catalyzes the transfer of the enolpyruvyl moiety of phosphoenolpyruvate (PEP) to the 5-hydroxyl of shikimate-3-phosphate (S3P) to produce enolpyruvyl shikimate-3-phosphate and inorganic phosphate. The sequence is that of 3-phosphoshikimate 1-carboxyvinyltransferase from Rhodopseudomonas palustris (strain ATCC BAA-98 / CGA009).